The chain runs to 777 residues: Zinc finger protein 786 (777 aa).

The 72-residue stretch at 9 to 80 folds into the KRAB domain; the sequence is LTFEDVAIYF…WGEKKKPDKE (72 aa). The C2H2-type 1; degenerate zinc finger occupies 194 to 216; it reads NSCPVCRENSWEKNHLVKQQKGH. The segment at 240-262 adopts a C2H2-type 2 zinc-finger fold; that stretch reads ISCLGCGKSFRLKQYLVRHLDIH. The segment at 268–291 adopts a C2H2-type 3; degenerate zinc-finger fold; that stretch reads PQCPKCKMCFHHERTLFSHHLKNS. The C2H2-type 4; degenerate zinc finger occupies 420–442; sequence VFCRKCGQGFTKHCGLTEHTRIL. 11 C2H2-type zinc fingers span residues 448–470, 476–498, 504–526, 532–554, 560–582, 588–610, 616–638, 644–665, 671–693, 699–721, and 727–749; these read FWCA…QRLH, FQCT…QLQH, FSCS…LRVH, FQCP…QRIH, FSCG…FRVH, FQCP…QRLH, FQCP…QLLH, FSCQ…MRTH, FQCP…QGLH, FHCP…QRIH, and FACG…IRVH.

Belongs to the krueppel C2H2-type zinc-finger protein family.

The protein resides in the nucleus. Its function is as follows. May be involved in transcriptional regulation. The sequence is that of Zinc finger protein 786 (Znf786) from Mus musculus (Mouse).